The following is a 945-amino-acid chain: Bifunctional glutamine synthetase adenylyltransferase/adenylyl-removing enzyme (945 aa).

Residues 1 to 441 (MLPLSAALQT…VFNDLIGDDS (441 aa)) form an adenylyl removase region. The segment at 450-945 (YQHYHSLWQD…VRASWAKWLG (496 aa)) is adenylyl transferase.

The protein belongs to the GlnE family. Mg(2+) is required as a cofactor.

It catalyses the reaction [glutamine synthetase]-O(4)-(5'-adenylyl)-L-tyrosine + phosphate = [glutamine synthetase]-L-tyrosine + ADP. It carries out the reaction [glutamine synthetase]-L-tyrosine + ATP = [glutamine synthetase]-O(4)-(5'-adenylyl)-L-tyrosine + diphosphate. Its function is as follows. Involved in the regulation of glutamine synthetase GlnA, a key enzyme in the process to assimilate ammonia. When cellular nitrogen levels are high, the C-terminal adenylyl transferase (AT) inactivates GlnA by covalent transfer of an adenylyl group from ATP to specific tyrosine residue of GlnA, thus reducing its activity. Conversely, when nitrogen levels are low, the N-terminal adenylyl removase (AR) activates GlnA by removing the adenylyl group by phosphorolysis, increasing its activity. The regulatory region of GlnE binds the signal transduction protein PII (GlnB) which indicates the nitrogen status of the cell. This Serratia proteamaculans (strain 568) protein is Bifunctional glutamine synthetase adenylyltransferase/adenylyl-removing enzyme.